We begin with the raw amino-acid sequence, 391 residues long: D-xylose 1-dehydrogenase (NADP(+)) (391 aa).

It belongs to the Gfo/Idh/MocA family.

The catalysed reaction is D-xylose + NADP(+) = D-xylono-1,5-lactone + NADPH + H(+). In terms of biological role, NADP-dependent D-xylose dehydrogenase catalyzing the oxydation of D-xylose into D-xylonolactone. Also displays some, albeit lower activity with D-glucose, D-galactose and L-arabinose as substrate. Probably not involved in D-xylose degradation, as it has been shown that H.jecorina assimilates D-xylose via D-xylose reductase and xylitol dehydrogenase, and it is unable to grow on D-xylonic acid as sole carbon source. May play a role in the regeneration of NADP(+) in the presence of D-xylose. This Hypocrea jecorina (strain ATCC 56765 / BCRC 32924 / NRRL 11460 / Rut C-30) (Trichoderma reesei) protein is D-xylose 1-dehydrogenase (NADP(+)).